We begin with the raw amino-acid sequence, 356 residues long: tRNA N6-adenosine threonylcarbamoyltransferase (356 aa).

The Fe cation site is built by His-110 and His-114. Residues 133–137 (LVSGG), Asp-166, Gly-179, and Asn-276 each bind substrate. Asp-304 contributes to the Fe cation binding site.

Belongs to the KAE1 / TsaD family. It depends on Fe(2+) as a cofactor.

The protein localises to the cytoplasm. It carries out the reaction L-threonylcarbamoyladenylate + adenosine(37) in tRNA = N(6)-L-threonylcarbamoyladenosine(37) in tRNA + AMP + H(+). Functionally, required for the formation of a threonylcarbamoyl group on adenosine at position 37 (t(6)A37) in tRNAs that read codons beginning with adenine. Is involved in the transfer of the threonylcarbamoyl moiety of threonylcarbamoyl-AMP (TC-AMP) to the N6 group of A37, together with TsaE and TsaB. TsaD likely plays a direct catalytic role in this reaction. The chain is tRNA N6-adenosine threonylcarbamoyltransferase from Teredinibacter turnerae (strain ATCC 39867 / T7901).